Consider the following 214-residue polypeptide: S-crystallin 1 (214 aa).

Residues 2-79 enclose the GST N-terminal domain; that stretch reads PSYTLHYFNH…YLAREFGFHG (78 aa). The region spanning 81–214 is the GST C-terminal domain; it reads NNMEMARVDF…YLQRRCRTDF (134 aa).

This sequence belongs to the GST superfamily. As to expression, lens.

Its function is as follows. S-crystallins are structural components of squids and octopi eye lens. Contains relatively little GST activity (1/1000 of that of mammalian GST enzyme). The sequence is that of S-crystallin 1 (OCTS1) from Octopus vulgaris (Common octopus).